We begin with the raw amino-acid sequence, 284 residues long: Phosphatidylserine decarboxylase proenzyme (284 aa).

Active-site charge relay system; for autoendoproteolytic cleavage activity residues include Asp-88, His-145, and Ser-248. Catalysis depends on Ser-248, which acts as the Schiff-base intermediate with substrate; via pyruvic acid; for decarboxylase activity. At Ser-248 the chain carries Pyruvic acid (Ser); by autocatalysis.

Belongs to the phosphatidylserine decarboxylase family. PSD-B subfamily. Prokaryotic type I sub-subfamily. As to quaternary structure, heterodimer of a large membrane-associated beta subunit and a small pyruvoyl-containing alpha subunit. The cofactor is pyruvate. Post-translationally, is synthesized initially as an inactive proenzyme. Formation of the active enzyme involves a self-maturation process in which the active site pyruvoyl group is generated from an internal serine residue via an autocatalytic post-translational modification. Two non-identical subunits are generated from the proenzyme in this reaction, and the pyruvate is formed at the N-terminus of the alpha chain, which is derived from the carboxyl end of the proenzyme. The autoendoproteolytic cleavage occurs by a canonical serine protease mechanism, in which the side chain hydroxyl group of the serine supplies its oxygen atom to form the C-terminus of the beta chain, while the remainder of the serine residue undergoes an oxidative deamination to produce ammonia and the pyruvoyl prosthetic group on the alpha chain. During this reaction, the Ser that is part of the protease active site of the proenzyme becomes the pyruvoyl prosthetic group, which constitutes an essential element of the active site of the mature decarboxylase.

Its subcellular location is the cell membrane. The enzyme catalyses a 1,2-diacyl-sn-glycero-3-phospho-L-serine + H(+) = a 1,2-diacyl-sn-glycero-3-phosphoethanolamine + CO2. Its pathway is phospholipid metabolism; phosphatidylethanolamine biosynthesis; phosphatidylethanolamine from CDP-diacylglycerol: step 2/2. Functionally, catalyzes the formation of phosphatidylethanolamine (PtdEtn) from phosphatidylserine (PtdSer). The chain is Phosphatidylserine decarboxylase proenzyme from Delftia acidovorans (strain DSM 14801 / SPH-1).